We begin with the raw amino-acid sequence, 479 residues long: MSAILSTTSKSFLSRGSTRQCQNMQKALFALLNARHYSSASEQTLKERFAEIIPAKAEEIKKFKKEHGKTVIGEVLLEQAYGGMRGIKGLVWEGSVLDPEEGIRFRGRTIPEIQRELPKAEGSTEPLPEALFWLLLTGEIPTDAQVKALSADLAARSEIPEHVIQLLDSLPKDLHPMAQFSIAVTALESESKFAKAYAQGVSKKEYWSYTFEDSLDLLGKLPVIASKIYRNVFKDGKITSTDPNADYGKNLAQLLGYENKDFIDLMRLYLTIHSDHEGGNVSAHTTHLVGSALSSPYLSLAAGLNGLAGPLHGRANQEVLEWLFKLREEVKGDYSKETIEKYLWDTLNAGRVVPGYGHAVLRKTDPRYTAQREFALKHFPDYELFKLVSTIYEVAPGVLTKHGKTKNPWPNVDSHSGVLLQYYGLTEASFYTVLFGVARAIGVLPQLIIDRAVGAPIERPKSFSTEKYKELVKKIESKN.

The N-terminal 37 residues, 1–37 (MSAILSTTSKSFLSRGSTRQCQNMQKALFALLNARHY), are a transit peptide targeting the mitochondrion. Residues His312, His358, and Asp413 contribute to the active site. At Ser462 the chain carries Phosphoserine.

This sequence belongs to the citrate synthase family. Monomer and homodimer. Exists as an inactive monomer when phosphorylated. Homodimerization is dependent on dephosphorylation of Ser-462 by PTC7 and is required for activity. Post-translationally, phosphorylation at Ser-462. Dephosphorylated at Ser-462 by PTC7.

The protein localises to the mitochondrion matrix. The catalysed reaction is oxaloacetate + acetyl-CoA + H2O = citrate + CoA + H(+). Its pathway is carbohydrate metabolism; tricarboxylic acid cycle; isocitrate from oxaloacetate: step 1/2. Its activity is regulated as follows. Phosphorylation at Ser-462 inhibits catalytic activity. Dephosphorylation at Ser-462 by PTC7 enhances catalytic activity. Its function is as follows. Specific citrate synthase with catalytic activity only with acetyl-CoA. This chain is Citrate synthase, mitochondrial, found in Saccharomyces cerevisiae (strain ATCC 204508 / S288c) (Baker's yeast).